A 296-amino-acid chain; its full sequence is Transcription factor Pur-alpha 1 (296 aa).

Met1 is modified (N-acetylmethionine). Disordered regions lie at residues 1 to 25 (MEAN…GGGG) and 186 to 214 (IPGH…EETG). Phosphoserine is present on Ser207.

It belongs to the PUR DNA-binding protein family. As to quaternary structure, homodimer. Interacts with TCP20.

The protein resides in the nucleus. Transcription factor that specifically binds the purine-rich double-stranded telomeric repeated sequence 5'-AAACCCTAA-3' found in promoter telo boxes. This Arabidopsis thaliana (Mouse-ear cress) protein is Transcription factor Pur-alpha 1 (PURA1).